The primary structure comprises 175 residues: MMYTVFVMSVLFVVGFVGVSSKPSPVYGGLGLVASGGVGCGIVVSFGGSFLGLMVFLVYLGGMMVVFGYTTAMATDEYPEAWGSNIVVLGALVGGLLMEGAAVVYLFSGGGLELVGLDLGSLENWMVFGGEGEELIREDYVGGSSLYSYGCWFMVMSGWMLFISVFIVIEVTRGR.

5 helical membrane-spanning segments follow: residues 1–21 (MMYT…GVSS), 24–44 (SPVY…GIVV), 46–66 (FGGS…MMVV), 86–106 (IVVL…VVYL), and 149–169 (YGCW…FIVI).

Belongs to the complex I subunit 6 family. In terms of assembly, core subunit of respiratory chain NADH dehydrogenase (Complex I) which is composed of 45 different subunits.

It localises to the mitochondrion inner membrane. The enzyme catalyses a ubiquinone + NADH + 5 H(+)(in) = a ubiquinol + NAD(+) + 4 H(+)(out). Its function is as follows. Core subunit of the mitochondrial membrane respiratory chain NADH dehydrogenase (Complex I) which catalyzes electron transfer from NADH through the respiratory chain, using ubiquinone as an electron acceptor. Essential for the catalytic activity and assembly of complex I. This chain is NADH-ubiquinone oxidoreductase chain 6 (MT-ND6), found in Dugong dugon (Dugong).